The chain runs to 712 residues: 3',5'-cyclic-AMP phosphodiesterase 4C (712 aa).

Disordered regions lie at residues methionine 1–histidine 31 and arginine 45–arginine 64. Positions serine 17–histidine 31 are enriched in basic residues. Residues serine 48–arginine 64 show a composition bias toward basic and acidic residues. A Phosphoserine modification is found at serine 73. The segment at alanine 181 to aspartate 200 is disordered. The PDEase domain maps to valine 312–serine 641. Histidine 388 serves as the catalytic Proton donor. Histidine 388 is a 3',5'-cyclic AMP binding site. Residues histidine 388 and histidine 392 each contribute to the AMP site. Residues histidine 392, histidine 428, aspartate 429, and aspartate 546 each contribute to the Zn(2+) site. Residues aspartate 429, aspartate 546, glutamine 597, and phenylalanine 600 each coordinate AMP. Mg(2+) is bound at residue aspartate 429. Mn(2+) is bound at residue aspartate 429. Residues glutamine 597 and phenylalanine 600 each contribute to the 3',5'-cyclic AMP site. Disordered regions lie at residues serine 636 to arginine 655 and glutamate 664 to threonine 712. Residue serine 641 is modified to Phosphoserine. A compositionally biased stretch (acidic residues) spans glutamate 664 to glutamate 678.

The protein belongs to the cyclic nucleotide phosphodiesterase family. PDE4 subfamily. As to quaternary structure, part of a complex containing AKAP5, ADCY5, ADCY6 and PKD2. Requires Zn(2+) as cofactor. Mg(2+) is required as a cofactor. Mn(2+) serves as cofactor. As to expression, expressed in various tissues but not in cells of the immune system.

The protein localises to the cell projection. The protein resides in the cilium. The catalysed reaction is 3',5'-cyclic AMP + H2O = AMP + H(+). Its pathway is purine metabolism; 3',5'-cyclic AMP degradation; AMP from 3',5'-cyclic AMP: step 1/1. With respect to regulation, inhibited by rolipram. In terms of biological role, hydrolyzes the second messenger cAMP, which is a key regulator of many important physiological processes. In Homo sapiens (Human), this protein is 3',5'-cyclic-AMP phosphodiesterase 4C.